A 395-amino-acid polypeptide reads, in one-letter code: Altered inheritance of mitochondria protein 39, mitochondrial (395 aa).

A helical membrane pass occupies residues 156 to 176; it reads QIWSAIFGGIFGVILGYSLIY.

It belongs to the AIM39 family.

It is found in the mitochondrion membrane. The polypeptide is Altered inheritance of mitochondria protein 39, mitochondrial (AIM39) (Saccharomyces cerevisiae (strain ATCC 204508 / S288c) (Baker's yeast)).